The following is a 404-amino-acid chain: Putative Peroxidase 48 (404 aa).

The first 18 residues, 1–18, serve as a signal peptide directing secretion; the sequence is MRFLGDYKFALLTCSVIA. Cystine bridges form between C77–C156, C110–C115, C162–C397, and C241–C273. H108 functions as the Proton acceptor in the catalytic mechanism. The Ca(2+) site is built by D109, I112, G114, D116, and S118. An N-linked (GlcNAc...) asparagine glycan is attached at N136. P204 is a binding site for substrate. Residue H234 coordinates heme b. S235 contacts Ca(2+). A glycan (N-linked (GlcNAc...) asparagine) is linked at N250. Residues 276–307 are disordered; it reads SVSTSSPSAPPDIGLPPSLPASDSENSYGMSS. Residues 283–294 show a composition bias toward pro residues; it reads SAPPDIGLPPSL. D287 is a Ca(2+) binding site. Positions 296 to 307 are enriched in polar residues; the sequence is ASDSENSYGMSS.

Belongs to the peroxidase family. Classical plant (class III) peroxidase subfamily. The cofactor is heme b. It depends on Ca(2+) as a cofactor.

It is found in the secreted. The enzyme catalyses 2 a phenolic donor + H2O2 = 2 a phenolic radical donor + 2 H2O. Removal of H(2)O(2), oxidation of toxic reductants, biosynthesis and degradation of lignin, suberization, auxin catabolism, response to environmental stresses such as wounding, pathogen attack and oxidative stress. These functions might be dependent on each isozyme/isoform in each plant tissue. In Arabidopsis thaliana (Mouse-ear cress), this protein is Putative Peroxidase 48 (PER48).